A 203-amino-acid polypeptide reads, in one-letter code: Proteasome subunit beta 2 (203 aa).

A propeptide spans 1–9 (removed in mature form; by autocatalysis); sequence MGEEVQIGA. The Nucleophile role is filled by threonine 10.

This sequence belongs to the peptidase T1B family. In terms of assembly, the 20S proteasome core is composed of 14 alpha and 14 beta subunits that assemble into four stacked heptameric rings, resulting in a barrel-shaped structure. The two inner rings, each composed of seven catalytic beta subunits, are sandwiched by two outer rings, each composed of seven alpha subunits. The catalytic chamber with the active sites is on the inside of the barrel. Has a gated structure, the ends of the cylinder being occluded by the N-termini of the alpha-subunits. Is capped at one or both ends by the proteasome regulatory ATPase, PAN.

The protein localises to the cytoplasm. The catalysed reaction is Cleavage of peptide bonds with very broad specificity.. The formation of the proteasomal ATPase PAN-20S proteasome complex, via the docking of the C-termini of PAN into the intersubunit pockets in the alpha-rings, triggers opening of the gate for substrate entry. Interconversion between the open-gate and close-gate conformations leads to a dynamic regulation of the 20S proteasome proteolysis activity. Functionally, component of the proteasome core, a large protease complex with broad specificity involved in protein degradation. The chain is Proteasome subunit beta 2 from Pyrobaculum arsenaticum (strain DSM 13514 / JCM 11321 / PZ6).